Reading from the N-terminus, the 385-residue chain is MDEIINKYQAVEKLFKEIQEGLAMYDQYKTLINELLHYNNHIKQEYFNFLMIISPYLIRAHSGETLRNKVNNEIKRLILVENINTKISKTLVSVNFLLQKKLSTDGVKTKNMWCTNNPMLQVKTAHNLFKQLCDTQSKTQWVQTLKYKECKYCHTDMVFNTTQFGLQCPNCGCIQELMGTIFDETHFYNHDGQKAKSGIFNPNRHYRFWIEHILGRNSEQELGTKQDPCGTKVLQQLKKIIKRDNKCIALLTVENIRKMLKEINRTDLNNCVSLILRKLTGVGPPQISESILLRGEYIFTEAIKIREKVCKKGRINRNYYPYYIYKIFDAILPPNDTTNRRILQYIHLQGNDTLANNDSEWESICMELPEIKWKPTDRTHCVHFF.

2 consecutive C2H2-type zinc fingers follow at residues 166-190 and 168-190; these read LQCPNCGCIQELMGTIFDETHFYNH and CPNCGCIQELMGTIFDETHFYNH.

It belongs to the asfivirus B385R family.

This is Zinc finger protein B385R from African swine fever virus (isolate Tick/South Africa/Pretoriuskop Pr4/1996) (ASFV).